The following is a 641-amino-acid chain: MSGPARIQLLSLRLANQIAAGEVVERPASVAKELLENSLDAGARRVDIEVEQGGVKLLRVRDDGCGIAADDLPLALARHATSKIRELEDLERVASLGFRGEALASIGSVARLTLTSRTADAGQAWQVETEGRDMEARVQPAAYPVGTSVEVRDLFFNTPARRKFLRAEKTEFEHLQEVVRRLALARFDVAFHLRHNGRSALALHEAGDETARARRVAAVCGPAFLEQALPIEVERAGLRLWGWVGLPTFSRSQADLQYFYVNGRMVRDKLVAHAVRQAYRDVLFNGRHPTFVLFLEVDPAVVDVNVHPTKHEVRFRDSRMIHDFLYGTLHRVLGEVRPEDRLAAPAAVAPPAPASGAAAGEFRGQEEMPLSATPPAREPARPAAWKGAGAGYQAPSPRPARSAEAGGVYREFFAPLAEPRTEPATRTGEESGISSGDTSLGDTSPGGIPPLGYALAQLKGIYILAENAQGLVLVDMHAAHERITYERLKTAMASEGLRGQPLLVPEGLALSQREADCAEEHAEWFQRLGFELQRLGPETLAIRQTPALLRQAEAGQLVRDVLADLLEYGSSDRIEAHLNELLATMACHGSVRANRRLTLPEMNALLRDMESTERSGQCNHGRPTWTQLGMADLDKLFLRGR.

The disordered stretch occupies residues 345-445 (PAAVAPPAPA…GDTSLGDTSP (101 aa)). Over residues 419–429 (PRTEPATRTGE) the composition is skewed to basic and acidic residues. Positions 432 to 442 (GISSGDTSLGD) are enriched in polar residues.

It belongs to the DNA mismatch repair MutL/HexB family.

Its function is as follows. This protein is involved in the repair of mismatches in DNA. It is required for dam-dependent methyl-directed DNA mismatch repair. May act as a 'molecular matchmaker', a protein that promotes the formation of a stable complex between two or more DNA-binding proteins in an ATP-dependent manner without itself being part of a final effector complex. The polypeptide is DNA mismatch repair protein MutL (Azotobacter vinelandii (strain DJ / ATCC BAA-1303)).